The sequence spans 670 residues: ATP-dependent RNA helicase DDX18 (670 aa).

Polar residues-rich tracts occupy residues 31–42 (SNLTLSETQNGD) and 83–105 (VTKS…SSNS). Positions 31–169 (SNLTLSETQN…ESEVPSLPLG (139 aa)) are disordered. Over residues 117–154 (MVNDAEPDTKKAKTENKGKSEEESAETTKETENNVEKP) the composition is skewed to basic and acidic residues. The Q motif motif lies at 179-207 (FASLCNLVNENTLKAIKEMGFTNMTEIQH). The region spanning 210-385 (IRPLLEGRDL…RISLKKEPLY (176 aa)) is the Helicase ATP-binding domain. Residue 223–230 (AKTGSGKT) coordinates ATP. Positions 333 to 336 (DEAD) match the DEAD box motif. A Helicase C-terminal domain is found at 399–569 (GLEQGYVVCP…DIQSQLEKLI (171 aa)).

Belongs to the DEAD box helicase family. DDX18/HAS1 subfamily. As to quaternary structure, interacts with NOL8; the interaction is RNA-dependent. Interacts with PRC2 complex components EZH2, SUZ2 and JARID2; these interactions prevent deposition of the repressive H3K27me3 mark onto rDNA in pluripotent cells.

Its subcellular location is the nucleus. It localises to the nucleolus. The protein localises to the chromosome. The enzyme catalyses ATP + H2O = ADP + phosphate + H(+). Its function is as follows. ATP-dependent RNA helicase that plays a role in the regulation of R-loop homeostasis in both endogenous R-loop-prone regions and at sites of DNA damage. At endogenous loci such as actively transcribed genes, may act as a helicase to resolve the formation of R-loop during transcription and prevent the interference of R-loop with DNA-replication machinery. Also participates in the removal of DNA-lesion-associated R-loop. Plays an essential role for establishing pluripotency during embryogenesis and for pluripotency maintenance in embryonic stem cells. Mechanistically, prevents the polycomb repressive complex 2 (PRC2) from accessing rDNA loci and protects the active chromatin status in nucleolus. The protein is ATP-dependent RNA helicase DDX18 (DDX18) of Homo sapiens (Human).